The chain runs to 209 residues: Large ribosomal subunit protein uL4 (209 aa).

The segment at 50-89 (MTKTKGLVSGGGKKPFKQKGTGGARQGSSRSILMPGGGTA) is disordered.

It belongs to the universal ribosomal protein uL4 family. In terms of assembly, part of the 50S ribosomal subunit.

In terms of biological role, one of the primary rRNA binding proteins, this protein initially binds near the 5'-end of the 23S rRNA. It is important during the early stages of 50S assembly. It makes multiple contacts with different domains of the 23S rRNA in the assembled 50S subunit and ribosome. Its function is as follows. Forms part of the polypeptide exit tunnel. The chain is Large ribosomal subunit protein uL4 from Bdellovibrio bacteriovorus (strain ATCC 15356 / DSM 50701 / NCIMB 9529 / HD100).